The primary structure comprises 122 residues: Small ribosomal subunit protein uS13 (122 aa).

Residues 95 to 122 (GLPVRGQRTRTNARTRKGPRKTVAKKKK) are disordered.

This sequence belongs to the universal ribosomal protein uS13 family. Part of the 30S ribosomal subunit. Forms a loose heterodimer with protein S19. Forms two bridges to the 50S subunit in the 70S ribosome.

Located at the top of the head of the 30S subunit, it contacts several helices of the 16S rRNA. In the 70S ribosome it contacts the 23S rRNA (bridge B1a) and protein L5 of the 50S subunit (bridge B1b), connecting the 2 subunits; these bridges are implicated in subunit movement. Contacts the tRNAs in the A and P-sites. This Thermoanaerobacter pseudethanolicus (strain ATCC 33223 / 39E) (Clostridium thermohydrosulfuricum) protein is Small ribosomal subunit protein uS13.